The sequence spans 259 residues: Adenosylcobinamide-GDP ribazoletransferase (259 aa).

The next 6 helical transmembrane spans lie at asparagine 9–valine 29, leucine 43–valine 63, serine 64–histidine 84, alanine 118–phenylalanine 138, valine 143–phenylalanine 163, and isoleucine 190–leucine 210.

This sequence belongs to the CobS family. It depends on Mg(2+) as a cofactor.

It is found in the cell inner membrane. The enzyme catalyses alpha-ribazole + adenosylcob(III)inamide-GDP = adenosylcob(III)alamin + GMP + H(+). It catalyses the reaction alpha-ribazole 5'-phosphate + adenosylcob(III)inamide-GDP = adenosylcob(III)alamin 5'-phosphate + GMP + H(+). Its pathway is cofactor biosynthesis; adenosylcobalamin biosynthesis; adenosylcobalamin from cob(II)yrinate a,c-diamide: step 7/7. Functionally, joins adenosylcobinamide-GDP and alpha-ribazole to generate adenosylcobalamin (Ado-cobalamin). Also synthesizes adenosylcobalamin 5'-phosphate from adenosylcobinamide-GDP and alpha-ribazole 5'-phosphate. The polypeptide is Adenosylcobinamide-GDP ribazoletransferase (Shewanella pealeana (strain ATCC 700345 / ANG-SQ1)).